A 765-amino-acid chain; its full sequence is uncharacterized protein (765 aa).

The signal sequence occupies residues 1-22 (MKLKGFLAVGVSVFGFSGLLMA). A lipid anchor (N-palmitoyl cysteine) is attached at C23. The S-diacylglycerol cysteine moiety is linked to residue C23. Disordered stretches follow at residues 177 to 203 (EGTP…LEIA) and 218 to 255 (TAQN…TTKS). Polar residues predominate over residues 179–192 (TPTSTTVQATVSSR). Residues 236–247 (SSSSSSTTSTTG) show a composition bias toward low complexity.

This sequence belongs to the MG185/MG260 family.

The protein resides in the cell membrane. This is an uncharacterized protein from Mycoplasma genitalium (strain ATCC 33530 / DSM 19775 / NCTC 10195 / G37) (Mycoplasmoides genitalium).